The chain runs to 309 residues: Porphobilinogen deaminase (309 aa).

Position 244 is an S-(dipyrrolylmethanemethyl)cysteine (cysteine 244).

Belongs to the HMBS family. In terms of assembly, monomer. Requires dipyrromethane as cofactor.

The catalysed reaction is 4 porphobilinogen + H2O = hydroxymethylbilane + 4 NH4(+). It functions in the pathway porphyrin-containing compound metabolism; protoporphyrin-IX biosynthesis; coproporphyrinogen-III from 5-aminolevulinate: step 2/4. Functionally, tetrapolymerization of the monopyrrole PBG into the hydroxymethylbilane pre-uroporphyrinogen in several discrete steps. The chain is Porphobilinogen deaminase from Listeria welshimeri serovar 6b (strain ATCC 35897 / DSM 20650 / CCUG 15529 / CIP 8149 / NCTC 11857 / SLCC 5334 / V8).